The primary structure comprises 37 residues: MVEPLLSGIVLGLVPVTIAGLFVTAYLQYRRGDLATF.

The helical transmembrane segment at 5–25 (LLSGIVLGLVPVTIAGLFVTA) threads the bilayer.

This sequence belongs to the PetG family. In terms of assembly, the 4 large subunits of the cytochrome b6-f complex are cytochrome b6, subunit IV (17 kDa polypeptide, PetD), cytochrome f and the Rieske protein, while the 4 small subunits are PetG, PetL, PetM and PetN. The complex functions as a dimer.

The protein localises to the plastid. It is found in the chloroplast thylakoid membrane. In terms of biological role, component of the cytochrome b6-f complex, which mediates electron transfer between photosystem II (PSII) and photosystem I (PSI), cyclic electron flow around PSI, and state transitions. PetG is required for either the stability or assembly of the cytochrome b6-f complex. In Chlamydomonas moewusii (Chlamydomonas eugametos), this protein is Cytochrome b6-f complex subunit 5.